We begin with the raw amino-acid sequence, 208 residues long: ATP-dependent Clp protease proteolytic subunit (208 aa).

S107 (nucleophile) is an active-site residue. H132 is an active-site residue.

This sequence belongs to the peptidase S14 family. As to quaternary structure, fourteen ClpP subunits assemble into 2 heptameric rings which stack back to back to give a disk-like structure with a central cavity, resembling the structure of eukaryotic proteasomes.

The protein resides in the cytoplasm. It carries out the reaction Hydrolysis of proteins to small peptides in the presence of ATP and magnesium. alpha-casein is the usual test substrate. In the absence of ATP, only oligopeptides shorter than five residues are hydrolyzed (such as succinyl-Leu-Tyr-|-NHMec, and Leu-Tyr-Leu-|-Tyr-Trp, in which cleavage of the -Tyr-|-Leu- and -Tyr-|-Trp bonds also occurs).. Cleaves peptides in various proteins in a process that requires ATP hydrolysis. Has a chymotrypsin-like activity. Plays a major role in the degradation of misfolded proteins. The sequence is that of ATP-dependent Clp protease proteolytic subunit from Jannaschia sp. (strain CCS1).